The sequence spans 924 residues: Protein translocase subunit SecA (924 aa).

ATP contacts are provided by residues Q87, 105-109 (GEGKT), and D515. Zn(2+) contacts are provided by C908, C910, C919, and H920.

This sequence belongs to the SecA family. In terms of assembly, monomer and homodimer. Part of the essential Sec protein translocation apparatus which comprises SecA, SecYEG and auxiliary proteins SecDF-YajC and YidC. Zn(2+) serves as cofactor.

It localises to the cell inner membrane. It is found in the cytoplasm. It catalyses the reaction ATP + H2O + cellular proteinSide 1 = ADP + phosphate + cellular proteinSide 2.. Its function is as follows. Part of the Sec protein translocase complex. Interacts with the SecYEG preprotein conducting channel. Has a central role in coupling the hydrolysis of ATP to the transfer of proteins into and across the cell membrane, serving both as a receptor for the preprotein-SecB complex and as an ATP-driven molecular motor driving the stepwise translocation of polypeptide chains across the membrane. The chain is Protein translocase subunit SecA from Cupriavidus pinatubonensis (strain JMP 134 / LMG 1197) (Cupriavidus necator (strain JMP 134)).